The sequence spans 224 residues: UPF0758 protein ABO_0214 (224 aa).

The 123-residue stretch at 102-224 (PLDNPDKAGQ…WVSLASRGAV (123 aa)) folds into the MPN domain. Zn(2+)-binding residues include H173, H175, and D186. A JAMM motif motif is present at residues 173–186 (HNHPSGVAEPSQSD).

This sequence belongs to the UPF0758 family.

This is UPF0758 protein ABO_0214 from Alcanivorax borkumensis (strain ATCC 700651 / DSM 11573 / NCIMB 13689 / SK2).